A 365-amino-acid chain; its full sequence is Protein YIM1 (365 aa).

It belongs to the YIM1 family.

The protein localises to the lipid droplet. The protein resides in the mitochondrion. The polypeptide is Protein YIM1 (YIM1) (Saccharomyces cerevisiae (strain RM11-1a) (Baker's yeast)).